Here is a 713-residue protein sequence, read N- to C-terminus: Ribosomal RNA large subunit methyltransferase K/L (713 aa).

Residues 43–154 (LAYRITLWTR…NGVITIAMNF (112 aa)) form the THUMP domain.

It belongs to the methyltransferase superfamily. RlmKL family.

The protein localises to the cytoplasm. The catalysed reaction is guanosine(2445) in 23S rRNA + S-adenosyl-L-methionine = N(2)-methylguanosine(2445) in 23S rRNA + S-adenosyl-L-homocysteine + H(+). It catalyses the reaction guanosine(2069) in 23S rRNA + S-adenosyl-L-methionine = N(2)-methylguanosine(2069) in 23S rRNA + S-adenosyl-L-homocysteine + H(+). Functionally, specifically methylates the guanine in position 2445 (m2G2445) and the guanine in position 2069 (m7G2069) of 23S rRNA. This Shewanella sp. (strain MR-4) protein is Ribosomal RNA large subunit methyltransferase K/L.